A 795-amino-acid polypeptide reads, in one-letter code: MINLDDKNNIGRVIPVSDIVLLPGMYHTLKFNKFSETQIESLSDEDIVNIALPLKQNFGQSKLKEEDFHRVGVTFQVNAIEKTEKGYKAEIKILDRVEIKTFSIEEDSIKAEFEFAPDIIDLTEKSKDEMVEYIKKVTREISENFKGSEKFMLAVEGQKDLNKLMGYLSHFMQISSEEKYDLLETQSLKDRGLKFIDYLLKQKESLKLQFELAEKFTEKANKNYRETVLREQLKAIQEELNEGKSSPSKKDKNYLNRIEEAQMPDEIKEVALEELGKLESQSPNSAEYNVIKNYLELLIQLPWKKQEFKDIDLEEARRILDEQHYGLEKVKDRIIQHLAVMQLKNDKKGSILLLVGPPGVGKTSLGKSIAEALNRKYVRLSLGGVRDEAEIRGHRRTYVGAMPGRIIQSIKKAGEINPVMVLDEVDKLMASYNGDPASALLEVLDPEQNDTFTDHYLDVPYDLSNVFFIATANSLDTIPRPLLDRMEVIQISSYTMNEKFHIGKNHLISAVLEEHGLNDTQLVIEDAALERIISEYTLEAGVRGLKKQIATIARIASEKIVSNKVELPFKVKEDDLEDLLGRKVSSHDKAQDDNVPGVVTGLAWTSVGGEILFIEATGMLGSGQIVLTGQLGDVMKESAQISLSLLKSRLPINAINFRERDIHIHVPSGSVPKDGPSAGIALFTALASLVTGIKVDSKLAMTGEITLRGAVLPIGGLKEKLLGAQRAGITKVLIPKDNVVDLNEVPQEVKEQLTIIAVETVEDVLRETLGISLPRIEHIFNPNKFIEGTFKPAEE.

Residues 11–203 (GRVIPVSDIV…KFIDYLLKQK (193 aa)) enclose the Lon N-terminal domain. 356-363 (GPPGVGKT) is a binding site for ATP. A Lon proteolytic domain is found at 593–771 (DNVPGVVTGL…EDVLRETLGI (179 aa)). Residues Ser-677 and Lys-720 contribute to the active site.

The protein belongs to the peptidase S16 family. Homohexamer. Organized in a ring with a central cavity.

It is found in the cytoplasm. It carries out the reaction Hydrolysis of proteins in presence of ATP.. Functionally, ATP-dependent serine protease that mediates the selective degradation of mutant and abnormal proteins as well as certain short-lived regulatory proteins. Required for cellular homeostasis and for survival from DNA damage and developmental changes induced by stress. Degrades polypeptides processively to yield small peptide fragments that are 5 to 10 amino acids long. Binds to DNA in a double-stranded, site-specific manner. The polypeptide is Lon protease (Clostridium beijerinckii (strain ATCC 51743 / NCIMB 8052) (Clostridium acetobutylicum)).